A 155-amino-acid polypeptide reads, in one-letter code: SsrA-binding protein (155 aa).

It belongs to the SmpB family.

It localises to the cytoplasm. In terms of biological role, required for rescue of stalled ribosomes mediated by trans-translation. Binds to transfer-messenger RNA (tmRNA), required for stable association of tmRNA with ribosomes. tmRNA and SmpB together mimic tRNA shape, replacing the anticodon stem-loop with SmpB. tmRNA is encoded by the ssrA gene; the 2 termini fold to resemble tRNA(Ala) and it encodes a 'tag peptide', a short internal open reading frame. During trans-translation Ala-aminoacylated tmRNA acts like a tRNA, entering the A-site of stalled ribosomes, displacing the stalled mRNA. The ribosome then switches to translate the ORF on the tmRNA; the nascent peptide is terminated with the 'tag peptide' encoded by the tmRNA and targeted for degradation. The ribosome is freed to recommence translation, which seems to be the essential function of trans-translation. This Gloeothece citriformis (strain PCC 7424) (Cyanothece sp. (strain PCC 7424)) protein is SsrA-binding protein.